Reading from the N-terminus, the 115-residue chain is Large ribosomal subunit protein bL19 (115 aa).

This sequence belongs to the bacterial ribosomal protein bL19 family.

Functionally, this protein is located at the 30S-50S ribosomal subunit interface and may play a role in the structure and function of the aminoacyl-tRNA binding site. The protein is Large ribosomal subunit protein bL19 of Streptococcus sanguinis (strain SK36).